Reading from the N-terminus, the 194-residue chain is Holliday junction branch migration complex subunit RuvA (194 aa).

Residues 1–64 form a domain I region; sequence MIGRLRGVLT…DDSAALYGFL (64 aa). Residues 65–140 form a domain II region; that stretch reads SESERRLFRH…RAADFNNGIS (76 aa). A flexible linker region spans residues 140-144; the sequence is STSGK. The interval 145-194 is domain III; it reads LNLDTVSEAALALQQLGYKPAEAARMARDAGTESDDVATVIKKALQAALC.

This sequence belongs to the RuvA family. As to quaternary structure, homotetramer. Forms an RuvA(8)-RuvB(12)-Holliday junction (HJ) complex. HJ DNA is sandwiched between 2 RuvA tetramers; dsDNA enters through RuvA and exits via RuvB. An RuvB hexamer assembles on each DNA strand where it exits the tetramer. Each RuvB hexamer is contacted by two RuvA subunits (via domain III) on 2 adjacent RuvB subunits; this complex drives branch migration. In the full resolvosome a probable DNA-RuvA(4)-RuvB(12)-RuvC(2) complex forms which resolves the HJ.

The protein resides in the cytoplasm. The RuvA-RuvB-RuvC complex processes Holliday junction (HJ) DNA during genetic recombination and DNA repair, while the RuvA-RuvB complex plays an important role in the rescue of blocked DNA replication forks via replication fork reversal (RFR). RuvA specifically binds to HJ cruciform DNA, conferring on it an open structure. The RuvB hexamer acts as an ATP-dependent pump, pulling dsDNA into and through the RuvAB complex. HJ branch migration allows RuvC to scan DNA until it finds its consensus sequence, where it cleaves and resolves the cruciform DNA. The polypeptide is Holliday junction branch migration complex subunit RuvA (Xylella fastidiosa (strain M12)).